We begin with the raw amino-acid sequence, 3961 residues long: Replicase polyprotein 1ab (3961 aa).

The C4-type; atypical zinc finger occupies 8–28 (CTCTPNARVFVAEGQVYCTRC). The Peptidase C31 domain maps to 69-180 (ECSPTGACWL…EDFCPFECAM (112 aa)). Positions 69 to 182 (ECSPTGACWL…FCPFECAMAD (114 aa)) are PCP1-alpha. Active-site for Nsp1-alpha papain-like cysteine proteinase activity residues include Cys76 and His146. Residues 199–200 (VS) form an important for host EIF2AK2 inhibition region. Residues 263 to 382 (DTVPEGNCWW…IFRFGSHKWY (120 aa)) are PCP1-beta. The Peptidase C32 domain maps to 263-383 (DTVPEGNCWW…FRFGSHKWYG (121 aa)). Catalysis depends on for Nsp1-beta papain-like cysteine proteinase activity residues Cys270 and His339. An OTU-like region spans residues 426–513 (LKLYSPPAEG…GEHWTVSVNP (88 aa)). The Peptidase C33 domain occupies 428 to 535 (LYSPPAEGNC…QGCCEHKGGL (108 aa)). Catalysis depends on for Nsp2 cysteine proteinase activity residues Cys437 and His506. The span at 810–819 (WTPPPPPPRV) shows a compositional bias: pro residues. 3 disordered regions span residues 810-875 (WTPP…FPTP), 899-918 (TPLD…SRPM), and 1148-1191 (TGEL…PADT). 7 helical membrane-spanning segments follow: residues 1266 to 1286 (FCLF…LGVF), 1296 to 1316 (GVFG…SDPV), 1368 to 1388 (VWHF…GAYV), 1583 to 1603 (LVAA…GVYV), 1648 to 1668 (LTAL…LIFV), 1685 to 1705 (CILL…LCVF), and 1719 to 1739 (ILWL…LAVV). The interval 1266-1388 (FCLFLCYSYP…ADCILAGAYV (123 aa)) is HD1. An HD2 region spans residues 1583 to 1745 (LVAALHVACS…LAVVLLVSLW (163 aa)). The region spanning 1810–2013 (GAFRTQKPSL…ALLAAKPELE (204 aa)) is the Peptidase S32 domain. Catalysis depends on charge relay system; for 3C-like serine proteinase activity residues His1848, Asp1873, and Ser1927. 5 helical membrane passes run 2036 to 2056 (WTPL…AVLV), 2060 to 2080 (FSFG…VLMI), 2092 to 2112 (LSLG…LAVT), 2137 to 2157 (SPVP…LYLF), and 2162 to 2182 (LHYV…RYFA). Residues 2036-2157 (WTPLVAVGFF…HLLAIILYLF (122 aa)) form an HD3 region. Residues 2488–2651 (IIDKLQGLTK…LPYKLYPVRG (164 aa)) form the NiRAN domain. The 135-residue stretch at 2890–3024 (GRCLEADLAS…YAESPSMPNY (135 aa)) folds into the RdRp catalytic domain. The AV ZBD domain occupies 3145-3208 (GKKSRMCGYC…PPLGKGTSPL (64 aa)). Positions 3151, 3154, 3164, 3169, 3172, 3174, 3176, 3178, 3185, 3187, 3194, and 3197 each coordinate Zn(2+). Residues 3265–3417 (ASTALLPTCK…VFDIMPQTQL (153 aa)) form the (+)RNA virus helicase ATP-binding domain. 3293–3300 (GPPGAGKT) lines the ATP pocket. The (+)RNA virus helicase C-terminal domain occupies 3418 to 3546 (KTIWRFGQNI…AVHRDEQLIV (129 aa)). The AV-Nsp11N/CoV-Nsp15M domain occupies 3585–3681 (EGSSSPLPKV…LTKFVRGEAQ (97 aa)). The 123-residue stretch at 3683-3805 (LPETVFSTGR…MVWKGKTAYF (123 aa)) folds into the NendoU domain. Residues His3714, His3729, and Lys3758 contribute to the active site.

The protein belongs to the arteriviridae polyprotein family. In terms of assembly, nsp1-alpha papain-like: Interacts with host RNF31. Interacts with host EIF2AK2; this interaction occurs in host stress granules and leads to EIF2AK2 inhibition. Interacts with host G3BP1; this interaction probably plays a role in Nsp1-beta-mediated inhibition of host EIF2AK2. As to quaternary structure, interacts with host DDX18; this interaction redistributes host DDX18 to the cytoplasm. In terms of assembly, interacts with host IFITM1. Interacts with host DDX5. As to quaternary structure, interacts with host OTULIN. In terms of assembly, interacts with host LGALS3. In terms of processing, specific enzymatic cleavages in vivo by its own proteases yield mature proteins. Nsp1 is autocleaved into two subunits, Nsp1-alpha and Nsp1-beta. There are two alternative pathways for processing. Either nsp4-5 is cleaved, which represents the major pathway or the nsp5-6 and nsp6-7 are processed, which represents the minor pathway. The major pathway occurs when nsp2 acts as a cofactor for nsp4.

It is found in the host nucleus. It localises to the host cytoplasm. The protein resides in the host membrane. Its subcellular location is the host endoplasmic reticulum. The protein localises to the host perinuclear region. The enzyme catalyses RNA(n) + a ribonucleoside 5'-triphosphate = RNA(n+1) + diphosphate. The catalysed reaction is ATP + H2O = ADP + phosphate + H(+). It catalyses the reaction Thiol-dependent hydrolysis of ester, thioester, amide, peptide and isopeptide bonds formed by the C-terminal Gly of ubiquitin (a 76-residue protein attached to proteins as an intracellular targeting signal).. It carries out the reaction uridylyl-uridylyl-ribonucleotide-RNA = a 3'-end uridylyl-2',3'-cyclophospho-uridine-RNA + a 5'-end dephospho-ribonucleoside-RNA. Functionally, contains the activities necessary for the transcription of negative stranded RNA, leader RNA, subgenomic mRNAs and progeny virion RNA as well as proteinases responsible for the cleavage of the polyprotein into functional products. In terms of biological role, inhibits host IFN-beta production. Plays a role in the degradation of the host transcriptional activator CREBBP protein. The degradation of host CREBBP which is a key component of the IFN enhanceosome is likely responsible for the inhibition of interferon mediated by Nsp1-alpha. Also participates in the inhibition of host NF-kappa-B activation by counteracting LUBAC-dependent induction of NF-kappa-B. Reduces host NEMO ubiquitination by blocking the interaction between the two LUBAC complex components RNF31 and SHARPIN. Its function is as follows. Plays a role in blocking host mRNA nuclear export to the cytoplasm and subversion of host protein synthesis. Additionally, inhibits the interferon-activated JAK/STAT signal transduction by mediating the ubiquitination and subsequent proteasomal degradation of host KPNA1. Repurposes the host antiviral stress granules into a proviral platform to counteract the EIF2AK2/PKR restriction, thereby regulating the host inflammatory response. Multifunctional protein that acts as a viral protease and as a viral antagonist of host immune response. Cleaves the nsp2/nsp3 site in the viral polyprotein. Displays deubiquitinating activity that cleaves both ubiquitinated and ISGylated products and therefore inhibits ubiquitin and ISG15-dependent host innate immunity. Also deubiquinates host NFKBIA, thereby interfering with NFKBIA degradation and impairing subsequent NF-kappa-B activation. Functionally, plays a role in the inhibition of the immune response by interacting with host IFITM1. This interaction leads to the proteasomal degradation of the IFN-induced antiviral protein IFITM1. In terms of biological role, cleaves the majority of cleavage sites present in the C-terminus of the polyprotein. Triggers host apoptosis through caspase-3, -8, and -9 activations. Subverts host innate immune responses through its protease activity. Targets the NF-kappa-B essential modulator NEMO and mediates its cleavage. Blocks host interferon beta induction and downstream signaling by cleaving mitochondrial MAVS, dislodging it from the mitochondria. Impairs host defense by cleaving host mRNA-decapping enzyme DCP1A to attenuate its antiviral activity. Its function is as follows. Plays a role in the initial induction of autophagosomes from host endoplasmic reticulum. Plays a role in the inhibition of host STAT3 signaling pathway by inducing the degradation of STAT3. Functionally, responsible for replication and transcription of the viral RNA genome. In terms of biological role, displays RNA and DNA duplex-unwinding activities with 5' to 3' polarity. Its function is as follows. Plays a role in viral transcription/replication and prevents the simultaneous activation of host cell dsRNA sensors, such as MDA5/IFIH1, OAS, PKR and NLRP3 inflammasome. Acts by degrading the 5'-polyuridines generated during replication of the poly(A) region of viral genomic and subgenomic RNAs. Catalyzes a two-step reaction in which a 2'3'-cyclic phosphate (2'3'-cP) is first generated by 2'-O transesterification, which is then hydrolyzed to a 3'-phosphate (3'-P). If not degraded, poly(U) RNA would hybridize with poly(A) RNA tails and activate host dsRNA sensors. Also plays a role in the inhibition of host type I interferon production by recruiting host OTULIN to promote removal of linear ubiquitination targeting host NEMO. The polypeptide is Replicase polyprotein 1ab (rep) (Porcine reproductive and respiratory syndrome virus (strain HB-1) (PRRSV)).